The sequence spans 154 residues: Interleukin-2 (154 aa).

An N-terminal signal peptide occupies residues 1 to 20 (MYKMQLLCCIALTLALMANG). An O-linked (GalNAc...) threonine glycan is attached at threonine 23. A disulfide bridge connects residues cysteine 78 and cysteine 126.

Belongs to the IL-2 family.

The protein localises to the secreted. Functionally, cytokine produced by activated CD4-positive helper T-cells and to a lesser extend activated CD8-positive T-cells and natural killer (NK) cells that plays pivotal roles in the immune response and tolerance. Binds to a receptor complex composed of either the high-affinity trimeric IL-2R (IL2RA/CD25, IL2RB/CD122 and IL2RG/CD132) or the low-affinity dimeric IL-2R (IL2RB and IL2RG). Interaction with the receptor leads to oligomerization and conformation changes in the IL-2R subunits resulting in downstream signaling starting with phosphorylation of JAK1 and JAK3. In turn, JAK1 and JAK3 phosphorylate the receptor to form a docking site leading to the phosphorylation of several substrates including STAT5. This process leads to activation of several pathways including STAT, phosphoinositide-3-kinase/PI3K and mitogen-activated protein kinase/MAPK pathways. Functions as a T-cell growth factor and can increase NK-cell cytolytic activity as well. Promotes strong proliferation of activated B-cells and subsequently immunoglobulin production. Plays a pivotal role in regulating the adaptive immune system by controlling the survival and proliferation of regulatory T-cells, which are required for the maintenance of immune tolerance. Moreover, participates in the differentiation and homeostasis of effector T-cell subsets, including Th1, Th2, Th17 as well as memory CD8-positive T-cells. This Sus scrofa (Pig) protein is Interleukin-2 (IL2).